Here is a 145-residue protein sequence, read N- to C-terminus: Protein FimA (145 aa).

It belongs to the fimbrial protein family.

It localises to the fimbrium. The chain is Protein FimA (fimA) from Bordetella pertussis.